The chain runs to 326 residues: L-Ala--D-Glu endopeptidase (326 aa).

The N-terminal stretch at 1 to 19 is a signal peptide; that stretch reads MKVLLSALLLLLFAFEPSA. Zn(2+) contacts are provided by His-204, Asp-208, His-292, and His-294.

It belongs to the peptidase M23B family. Zn(2+) serves as cofactor.

Functionally, L-Ala--D-Glu endopeptidase involved in production of single L-alanine side chains from tetrapeptides in the spore cortex peptidoglycan. Therefore, is required for the endospore cortex maturation. The chain is L-Ala--D-Glu endopeptidase (lytH) from Bacillus subtilis (strain 168).